The sequence spans 356 residues: 3-isopropylmalate dehydrogenase (356 aa).

The substrate site is built by R95, R105, R133, and D223. 3 residues coordinate Mg(2+): D223, D247, and D251. 281 to 293 (GSAPDIAGQNKAN) contributes to the NAD(+) binding site.

The protein belongs to the isocitrate and isopropylmalate dehydrogenases family. LeuB type 1 subfamily. As to quaternary structure, homodimer. The cofactor is Mg(2+). Mn(2+) is required as a cofactor.

The protein resides in the cytoplasm. The catalysed reaction is (2R,3S)-3-isopropylmalate + NAD(+) = 4-methyl-2-oxopentanoate + CO2 + NADH. It functions in the pathway amino-acid biosynthesis; L-leucine biosynthesis; L-leucine from 3-methyl-2-oxobutanoate: step 3/4. In terms of biological role, catalyzes the oxidation of 3-carboxy-2-hydroxy-4-methylpentanoate (3-isopropylmalate) to 3-carboxy-4-methyl-2-oxopentanoate. The product decarboxylates to 4-methyl-2 oxopentanoate. In Neisseria meningitidis serogroup A / serotype 4A (strain DSM 15465 / Z2491), this protein is 3-isopropylmalate dehydrogenase.